Consider the following 232-residue polypeptide: Rhamnogalacturonan acetylesterase RhgT (232 aa).

The active-site Nucleophile is Ser14. Residues Glu191 and His195 contribute to the active site.

The protein belongs to the 'GDSL' lipolytic enzyme family. Monomer.

Its activity is regulated as follows. Almost completely inhibited by diethylpyrocarbonate at 5 mM and completely inhibited by phenylmethylsulfonyl fluoride (PMSF) at 50 mM. Dimethyl phosphite achieves only a 53% inhibition. Also inhibited by metal ions (magnesium, manganese and calcium) and chelating agent (EDTA) at the same level. In terms of biological role, may play a role in the degradation of type I rhamnogalacturonan derived from plant cell walls. This enzyme has a broad substrate specificity, and shows strong preference for glucose pentaacetate, beta-naphthylacetate, and p-nitrophenyl acetate (pNPA). Also active toward acetylated xylan. The sequence is that of Rhamnogalacturonan acetylesterase RhgT (rhgT) from Bacillus subtilis (strain 168).